The chain runs to 567 residues: Urease subunit alpha (567 aa).

The 439-residue stretch at 129-567 (GGVDTHIHWI…LPMAQRYFLF (439 aa)) folds into the Urease domain. Positions 134, 136, and 217 each coordinate Ni(2+). Residue lysine 217 is modified to N6-carboxylysine. Histidine 219 contributes to the substrate binding site. Ni(2+) is bound by residues histidine 246 and histidine 272. Residue histidine 320 is the Proton donor of the active site. Ni(2+) is bound at residue aspartate 360.

It belongs to the metallo-dependent hydrolases superfamily. Urease alpha subunit family. In terms of assembly, heterotrimer of UreA (gamma), UreB (beta) and UreC (alpha) subunits. Three heterotrimers associate to form the active enzyme. Ni cation serves as cofactor. In terms of processing, carboxylation allows a single lysine to coordinate two nickel ions.

It is found in the cytoplasm. The catalysed reaction is urea + 2 H2O + H(+) = hydrogencarbonate + 2 NH4(+). It functions in the pathway nitrogen metabolism; urea degradation; CO(2) and NH(3) from urea (urease route): step 1/1. The sequence is that of Urease subunit alpha from Escherichia coli O157:H7.